The following is a 320-amino-acid chain: o-succinylbenzoate synthase (320 aa).

The Proton donor role is filled by lysine 133. Mg(2+)-binding residues include aspartate 161, glutamate 190, and aspartate 213. Catalysis depends on lysine 235, which acts as the Proton acceptor.

It belongs to the mandelate racemase/muconate lactonizing enzyme family. MenC type 1 subfamily. A divalent metal cation serves as cofactor.

It catalyses the reaction (1R,6R)-6-hydroxy-2-succinyl-cyclohexa-2,4-diene-1-carboxylate = 2-succinylbenzoate + H2O. It participates in quinol/quinone metabolism; 1,4-dihydroxy-2-naphthoate biosynthesis; 1,4-dihydroxy-2-naphthoate from chorismate: step 4/7. Its pathway is quinol/quinone metabolism; menaquinone biosynthesis. Converts 2-succinyl-6-hydroxy-2,4-cyclohexadiene-1-carboxylate (SHCHC) to 2-succinylbenzoate (OSB). The sequence is that of o-succinylbenzoate synthase from Escherichia coli O81 (strain ED1a).